The sequence spans 1045 residues: Putative sodium-coupled neutral amino acid transporter 10 (1045 aa).

10 helical membrane passes run 8–28 (LIMN…PFCF), 33–53 (ILLG…SCMF), 85–105 (SMIG…GDLG), 117–137 (VSEG…VLPL), 150–170 (FSAM…LSSF), 226–246 (IFAL…FFGY), 269–289 (MIRV…ILPC), 320–340 (ILTL…PNVE), 342–362 (ILGL…PALI), and 375–395 (FILG…LTVT). 3 stretches are compositionally biased toward basic and acidic residues: residues 412-453 (KEEK…EEQI), 460-479 (PQKE…RPDQ), and 503-546 (VDEK…DQAE). 2 disordered regions span residues 412 to 584 (KEEK…EQPP) and 606 to 658 (EIAE…AEAG). A compositionally biased stretch (polar residues) spans 564-573 (NDPNKQQLVN). The span at 627-658 (PIKDEKNEQIPGDPGKESHVEPKAEDNQAEAG) shows a compositional bias: basic and acidic residues.

Belongs to the amino acid/polyamine transporter 2 family.

It localises to the membrane. In terms of biological role, putative sodium-dependent amino acid/proton antiporter. This is Putative sodium-coupled neutral amino acid transporter 10 (slc38a10) from Xenopus laevis (African clawed frog).